The primary structure comprises 478 residues: Protein nucleotidyltransferase YdiU (478 aa).

ATP is bound by residues Gly84, Gly86, Arg87, Lys107, Asp119, Gly120, Arg170, and Arg177. Catalysis depends on Asp246, which acts as the Proton acceptor. Asn247 and Asp256 together coordinate Mg(2+). Residue Asp256 participates in ATP binding.

The protein belongs to the SELO family. It depends on Mg(2+) as a cofactor. Mn(2+) is required as a cofactor.

It catalyses the reaction L-seryl-[protein] + ATP = 3-O-(5'-adenylyl)-L-seryl-[protein] + diphosphate. The enzyme catalyses L-threonyl-[protein] + ATP = 3-O-(5'-adenylyl)-L-threonyl-[protein] + diphosphate. It carries out the reaction L-tyrosyl-[protein] + ATP = O-(5'-adenylyl)-L-tyrosyl-[protein] + diphosphate. The catalysed reaction is L-histidyl-[protein] + UTP = N(tele)-(5'-uridylyl)-L-histidyl-[protein] + diphosphate. It catalyses the reaction L-seryl-[protein] + UTP = O-(5'-uridylyl)-L-seryl-[protein] + diphosphate. The enzyme catalyses L-tyrosyl-[protein] + UTP = O-(5'-uridylyl)-L-tyrosyl-[protein] + diphosphate. Nucleotidyltransferase involved in the post-translational modification of proteins. It can catalyze the addition of adenosine monophosphate (AMP) or uridine monophosphate (UMP) to a protein, resulting in modifications known as AMPylation and UMPylation. This Escherichia coli O6:K15:H31 (strain 536 / UPEC) protein is Protein nucleotidyltransferase YdiU.